A 430-amino-acid chain; its full sequence is Glutamate-1-semialdehyde 2,1-aminomutase (430 aa).

Lys265 is modified (N6-(pyridoxal phosphate)lysine).

It belongs to the class-III pyridoxal-phosphate-dependent aminotransferase family. HemL subfamily. In terms of assembly, homodimer. Pyridoxal 5'-phosphate is required as a cofactor.

The protein localises to the cytoplasm. The enzyme catalyses (S)-4-amino-5-oxopentanoate = 5-aminolevulinate. The protein operates within porphyrin-containing compound metabolism; protoporphyrin-IX biosynthesis; 5-aminolevulinate from L-glutamyl-tRNA(Glu): step 2/2. In Helicobacter pylori (strain HPAG1), this protein is Glutamate-1-semialdehyde 2,1-aminomutase.